We begin with the raw amino-acid sequence, 247 residues long: uncharacterized protein (247 aa).

The segment at 225-247 is disordered; that stretch reads LASAPVPPSGSGNSGHRRANLGL.

This is an uncharacterized protein from Methanocaldococcus jannaschii (strain ATCC 43067 / DSM 2661 / JAL-1 / JCM 10045 / NBRC 100440) (Methanococcus jannaschii).